Consider the following 318-residue polypeptide: 4-diphosphocytidyl-2-C-methyl-D-erythritol kinase (318 aa).

Residue K13 is part of the active site. Position 101 to 111 (101 to 111) interacts with ATP; that stretch reads PVAGGMAGGSA. D143 is a catalytic residue. The interval 298 to 318 is disordered; that stretch reads PGARLVTDDRADRPTPPQVHA.

Belongs to the GHMP kinase family. IspE subfamily.

The catalysed reaction is 4-CDP-2-C-methyl-D-erythritol + ATP = 4-CDP-2-C-methyl-D-erythritol 2-phosphate + ADP + H(+). Its pathway is isoprenoid biosynthesis; isopentenyl diphosphate biosynthesis via DXP pathway; isopentenyl diphosphate from 1-deoxy-D-xylulose 5-phosphate: step 3/6. Catalyzes the phosphorylation of the position 2 hydroxy group of 4-diphosphocytidyl-2C-methyl-D-erythritol. In Saccharopolyspora erythraea (strain ATCC 11635 / DSM 40517 / JCM 4748 / NBRC 13426 / NCIMB 8594 / NRRL 2338), this protein is 4-diphosphocytidyl-2-C-methyl-D-erythritol kinase.